The sequence spans 93 residues: uncharacterized protein (93 aa).

This is an uncharacterized protein from Schizosaccharomyces pombe (strain 972 / ATCC 24843) (Fission yeast).